Here is a 607-residue protein sequence, read N- to C-terminus: MSHFPKLLSSQIAYDVARTMLDGFDKHYRLFREVSIEAKARFEVGDWHGLQQLQRDRIAFYNQRVHETIVTLQDEYDAEDIEDEIWQQIKLHYIGLLTNHHQPELAETFFNSVFTRIQHRSYFNNDFIFVRPAISTEYIENEESPIKPTYRAYYPGSREGMAACFERIVNNFQLERPFEDLKRDAGYVARAITEHFGEFRIAPNFQVHTLSSLFFRNKTAFVIGRVINGDHTYPLVVPIIHAASGKLVLDTVLLHREQILILFSFAHAYFMVDMEIPSAYVTFLRDLLPRKSRAEIYTSLGLQKQGKNLFYRDFLHHLQHSSDKFISAPGIKGLVMLVFTLPSFPYVFKVIRDFFPAPKETTRELVKSKYQLVKQHDRVGRMADTLEYSDVAFPLSRFDDALVRELEQHAPSMIEYQRSKQGEDEIVVRHVYIERRMTPLNIWLQEGTDEQVDHGILEYGNAVKELIAANIFPGDMLYKNFGVTRHGRVVFYDYDEIEYLTDCNVRRVPAPRNEEEEMSGEVWYTVRPHDIFPETYGTFLLGDPRVRAAFMRHHPDFFDAAMWQHHKDRLLAGHVHDFFAYHSQERFIHRYGSGATGPATEEPRRAA.

Residues 328 to 334 (APGIKGL) and Lys349 contribute to the ATP site. Asp384 is an active-site residue.

It belongs to the AceK family.

It is found in the cytoplasm. The catalysed reaction is L-seryl-[isocitrate dehydrogenase] + ATP = O-phospho-L-seryl-[isocitrate dehydrogenase] + ADP + H(+). In terms of biological role, bifunctional enzyme which can phosphorylate or dephosphorylate isocitrate dehydrogenase (IDH) on a specific serine residue. This is a regulatory mechanism which enables bacteria to bypass the Krebs cycle via the glyoxylate shunt in response to the source of carbon. When bacteria are grown on glucose, IDH is fully active and unphosphorylated, but when grown on acetate or ethanol, the activity of IDH declines drastically concomitant with its phosphorylation. In Cupriavidus metallidurans (strain ATCC 43123 / DSM 2839 / NBRC 102507 / CH34) (Ralstonia metallidurans), this protein is Isocitrate dehydrogenase kinase/phosphatase.